Reading from the N-terminus, the 664-residue chain is METPSQRRATRSGAQASSTPLSPTRITRLQEKEDLQELNDRLAVYIDRVRSLETENAGLRLRITESEEVVSREVSGIKAAYEAELGDARKTLDSVAKERARLQLELSKVREEFKELKARNTKKEGDLIAAQARLKDLEALLNSKEAALSTALSEKRTLEGELHDLRGQVAKLEAALGEAKKQLQDEMLRRVDAENRLQTMKEELDFQKNIYSEELRETKRRHETRLVEIDNGKQREFESRLADALQELRAQHEDQVEQYKKELEKTYSAKLDNARQSAERNSNLVGAAHEELQQSRIRIDSLSAQLSQLQKQLAAKEAKLRDLEDSLARERDTSRRLLAEKEREMAEMRARMQQQLDEYQELLDIKLALDMEIHAYRKLLEGEEERLRLSPSPTSQRSRGRASSHSSQTQGGGSVTKKRKLESTESRSSFSQHARTSGRVAVEEVDEEGKFVRLRNKSNEDQSMGNWQIKRQNGDDPLLTYRFPPKFTLKAGQVVTIWAAGAGATHSPPTDLVWKAQNTWGCGNSLRTALINSTGEEVAMRKLVRSVTVVEDDEDEDGDDLLHHHHGSHCSSSGDPAEYNLRSRTVLCGTCGQPADKASASGSGAQVGGPISSGSSASSVTVTRSYRSVGGSGGGSFGDNLVTRSYLLGNSSPRTQSPQNCSIM.

Residue methionine 1 is modified to N-acetylmethionine. A disordered region spans residues 1-25; it reads METPSQRRATRSGAQASSTPLSPTR. A head region spans residues 1-33; sequence METPSQRRATRSGAQASSTPLSPTRITRLQEKE. The interval 1–130 is interaction with MLIP; it reads METPSQRRAT…TKKEGDLIAA (130 aa). A Phosphothreonine modification is found at threonine 3. Serine 5 carries the phosphoserine modification. The residue at position 10 (threonine 10) is a Phosphothreonine. A phosphoserine mark is found at serine 12 and serine 18. At threonine 19 the chain carries Phosphothreonine. Phosphoserine; by CDK1 is present on serine 22. Residues 31-387 form the IF rod domain; sequence EKEDLQELND…KLLEGEEERL (357 aa). N6-acetyllysine; alternate is present on lysine 32. Lysine 32 carries the post-translational modification N6-succinyllysine; alternate. Lysine 32 participates in a covalent cross-link: Glycyl lysine isopeptide (Lys-Gly) (interchain with G-Cter in SUMO2); alternate. The tract at residues 34–70 is coil 1A; it reads DLQELNDRLAVYIDRVRSLETENAGLRLRITESEEVV. A phosphoserine mark is found at serine 51, serine 66, and serine 71. The segment at 71–80 is linker 1; sequence SREVSGIKAA. Residues lysine 78 and lysine 97 each carry the N6-acetyllysine modification. The tract at residues 81–218 is coil 1B; the sequence is YEAELGDARK…NIYSEELRET (138 aa). A Glycyl lysine isopeptide (Lys-Gly) (interchain with G-Cter in SUMO2) cross-link involves residue lysine 97. A Phosphoserine modification is found at serine 107. Residues lysine 108, lysine 114, lysine 123, lysine 135, lysine 144, and lysine 155 each carry the N6-acetyllysine modification. Residue lysine 171 is modified to N6-acetyllysine; alternate. Lysine 171 carries the N6-succinyllysine; alternate modification. Lysine 171 is covalently cross-linked (Glycyl lysine isopeptide (Lys-Gly) (interchain with G-Cter in SUMO2); alternate). N6-acetyllysine occurs at positions 180, 201, and 208. Residue lysine 201 forms a Glycyl lysine isopeptide (Lys-Gly) (interchain with G-Cter in SUMO2); alternate linkage. Lysine 201 participates in a covalent cross-link: Glycyl lysine isopeptide (Lys-Gly) (interchain with G-Cter in SUMO); alternate. Lysine 208 is covalently cross-linked (Glycyl lysine isopeptide (Lys-Gly) (interchain with G-Cter in SUMO2)). Serine 212 carries the phosphoserine modification. Residues lysine 219 and lysine 233 each participate in a glycyl lysine isopeptide (Lys-Gly) (interchain with G-Cter in SUMO2) cross-link. Residues 219–242 form a linker 2 region; it reads KRRHETRLVEIDNGKQREFESRLA. N6-acetyllysine is present on residues lysine 233, lysine 260, lysine 265, and lysine 270. The coil 2 stretch occupies residues 243-383; it reads DALQELRAQH…HAYRKLLEGE (141 aa). The tract at residues 259–331 is necessary and sufficient for the interaction with IFFO1; sequence YKKELEKTYS…DLEDSLARER (73 aa). Lysine 260 participates in a covalent cross-link: Glycyl lysine isopeptide (Lys-Gly) (interchain with G-Cter in SUMO2); alternate. Lysine 270 participates in a covalent cross-link: Glycyl lysine isopeptide (Lys-Gly) (interchain with G-Cter in SUMO2); alternate. The residue at position 277 (serine 277) is a Phosphoserine. Residue serine 282 is modified to Phosphoserine; by ATR. 2 positions are modified to phosphoserine: serine 301 and serine 307. A Glycyl lysine isopeptide (Lys-Gly) (interchain with G-Cter in SUMO2); alternate cross-link involves residue lysine 311. N6-acetyllysine is present on residues lysine 311, lysine 316, and lysine 341. Residues lysine 366 and lysine 378 each participate in a glycyl lysine isopeptide (Lys-Gly) (interchain with G-Cter in SUMO2) cross-link. The disordered stretch occupies residues 384-442; it reads EERLRLSPSPTSQRSRGRASSHSSQTQGGGSVTKKRKLESTESRSSFSQHARTSGRVAV. The tract at residues 384-664 is tail; the sequence is EERLRLSPSP…TQSPQNCSIM (281 aa). Serine 390 carries the post-translational modification Phosphoserine. Serine 392 bears the Phosphoserine; by CDK1 mark. Serine 395 carries the post-translational modification Phosphoserine; by ATR. Residues serine 398, serine 403, serine 404, serine 406, serine 407, and serine 414 each carry the phosphoserine modification. Threonine 416 bears the Phosphothreonine mark. Residue lysine 417 is modified to N6-acetyllysine. Residues lysine 417 and lysine 420 each participate in a glycyl lysine isopeptide (Lys-Gly) (interchain with G-Cter in SUMO2) cross-link. The Nuclear localization signal motif lies at 417-422; the sequence is KKRKLE. Serine 423, serine 426, serine 429, and serine 431 each carry phosphoserine. The segment covering 426-435 has biased composition (polar residues); the sequence is SRSSFSQHAR. Residues 428 to 545 form the LTD domain; that stretch reads SSFSQHARTS…EEVAMRKLVR (118 aa). A Glycyl lysine isopeptide (Lys-Gly) (interchain with G-Cter in SUMO2); alternate cross-link involves residue lysine 450. N6-acetyllysine occurs at positions 450 and 457. Phosphoserine occurs at positions 458 and 463. Residues lysine 470 and lysine 486 each participate in a glycyl lysine isopeptide (Lys-Gly) (interchain with G-Cter in SUMO2) cross-link. N6-acetyllysine is present on lysine 486. 3 positions are modified to phosphothreonine: threonine 496, threonine 505, and threonine 510. Serine 533 and serine 546 each carry phosphoserine. Threonine 548 is subject to Phosphothreonine. The disordered stretch occupies residues 552-576; it reads DDEDEDGDDLLHHHHGSHCSSSGDP. Phosphoserine occurs at positions 568 and 571. Lysine 597 is covalently cross-linked (Glycyl lysine isopeptide (Lys-Gly) (interchain with G-Cter in SUMO2); alternate). Lysine 597 participates in a covalent cross-link: Glycyl lysine isopeptide (Lys-Gly) (interchain with G-Cter in SUMO1); alternate. The segment at 598-619 is disordered; the sequence is ASASGSGAQVGGPISSGSSASS. Phosphoserine occurs at positions 612, 613, 616, and 619. Serine 625 and serine 628 each carry an O-linked (GlcNAc) serine glycan. 4 positions are modified to phosphoserine: serine 628, serine 632, serine 636, and serine 652. Residues 647–661 constitute a propeptide, removed in Lamin-A/C form; the sequence is LLGNSSPRTQSPQNC. Cysteine 661 carries the cysteine methyl ester modification. Cysteine 661 carries S-farnesyl cysteine lipidation. The propeptide at 662–664 is removed in Prelamin-A/C form and in Lamin-A/C form; it reads SIM.

Belongs to the intermediate filament family. Homodimer of lamin A and lamin C. Lamin dimers then assemble into dimeric head-to-tail polymers. Ultimately, two head-to-tail polymers assemble laterally into a protofilament with a uniformly shaped rod of 3.5 nm in diameter. Interacts with lamin-associated polypeptides IA, IB and TMPO-alpha, RB1 and with emerin. Interacts with SREBF1, SREBF2, SUN2 and TMEM43. Interacts with TMEM201. Proteolytically processed isoform A interacts with NARF. Interacts with SUN1. Interacts with MLIP. Interacts with DMPK; may regulate nuclear envelope stability. Interacts with SUV39H1; the interaction increases stability of SUV39H1. Interacts with SYNE2. Interacts with ITSN1 isoform 2. Interacts with IFFO1; enables the formation of an interior nucleoskeleton that is recruited to DNA double-strand breaks. As to quaternary structure, interacts with EMD. In terms of assembly, interacts (via C-terminus) with LEMD2 (via N-terminus) (in vitro). Proteolytic cleavage of the C-terminal of 18 residues of prelamin-A/C results in the production of lamin-A/C. The prelamin-A/C maturation pathway includes farnesylation of CAAX motif by protein farnesyltransferase (FNTA and FNTB), removal of the last three amino acids (-AAX) by RCE1/FACE2 and/or ZMPSTE24, methylation of the C-terminal cysteine by ICMT and endoproteolytic removal of the last 15 C-terminal amino acids by ZMPSTE24. Proteolytic cleavage requires prior farnesylation and methylation, and absence of these blocks cleavage. In terms of processing, farnesylation of prelamin-A/C facilitates nuclear envelope targeting. Post-translationally, phosphorylation plays a key role in lamin organization, subcellular localization and nuclear envelope disintegration. Phosphorylation by CDK1 at Ser-22 and Ser-392 at the onset of mitosis drives lamin disassembly and nuclear envelope breakdown. Phosphorylation at Ser-22 and Ser-392 during interphase promotes localization to the nucleoplasm and regulates lamina assembly. Phosphorylation at Ser-22, Ser-392 and Ser-628 during interphase causes redistribution between the nucleus and the cytoplasm. Phosphorylation at Ser-22 by CDK1 regulates matrix stiffness. Phosphorylation status of Ser-22 determines its localization between double-strand break (DSB) sites and the nuclear matrix. Phosphorylated by ATR at Ser-282 in response to DNA damage, leading to lamin disassembly and nuclear envelope rupture. Phosphorylation also regulates stability in micronuclei arising from genome instability: phosphorylation at Ser-395 by ATR in response to genome instability and double-stranded DNA breaks primes LMNA for subsequent phosphorylation at Ser-392 by CDK1 and micronuclei envelope rupture. The rupture of micronuclear envelope triggers the cGAS-STING pathway thereby activating the type I interferon response and innate immunity. Acetylation by KAT8 is required for nuclear architecture. In terms of processing, sumoylation is necessary for the localization to the nuclear envelope. In the arteries, prelamin-A/C accumulation is not observed in young healthy vessels but is prevalent in medial vascular smooth muscle cells (VSMCs) from aged individuals and in atherosclerotic lesions, where it often colocalizes with senescent and degenerate VSMCs. Prelamin-A/C expression increases with age and disease. In normal aging, the accumulation of prelamin-A/C is caused in part by the down-regulation of ZMPSTE24/FACE1 in response to oxidative stress.

Its subcellular location is the nucleus lamina. It is found in the nucleus envelope. The protein localises to the nucleus. It localises to the nucleoplasm. The protein resides in the nucleus matrix. Its subcellular location is the nucleus speckle. In terms of biological role, lamins are intermediate filament proteins that assemble into a filamentous meshwork, and which constitute the major components of the nuclear lamina, a fibrous layer on the nucleoplasmic side of the inner nuclear membrane. Lamins provide a framework for the nuclear envelope, bridging the nuclear envelope and chromatin, thereby playing an important role in nuclear assembly, chromatin organization, nuclear membrane and telomere dynamics. Lamin A and C also regulate matrix stiffness by conferring nuclear mechanical properties. The structural integrity of the lamina is strictly controlled by the cell cycle, as seen by the disintegration and formation of the nuclear envelope in prophase and telophase, respectively. Lamin A and C are present in equal amounts in the lamina of mammals. Also invoved in DNA repair: recruited by DNA repair proteins XRCC4 and IFFO1 to the DNA double-strand breaks (DSBs) to prevent chromosome translocation by immobilizing broken DNA ends. Required for normal development of peripheral nervous system and skeletal muscle and for muscle satellite cell proliferation. Required for osteoblastogenesis and bone formation. Also prevents fat infiltration of muscle and bone marrow, helping to maintain the volume and strength of skeletal muscle and bone. Required for cardiac homeostasis. Functionally, prelamin-A/C can accelerate smooth muscle cell senescence. It acts to disrupt mitosis and induce DNA damage in vascular smooth muscle cells (VSMCs), leading to mitotic failure, genomic instability, and premature senescence. In Homo sapiens (Human), this protein is Prelamin-A/C (LMNA).